A 2924-amino-acid chain; its full sequence is Probable polyketide synthase 6 (2924 aa).

The Ketosynthase family 3 (KS3) domain maps to 11–442 (EKGVAIVGIG…GSNCCLLISE (432 aa)). Catalysis depends on for beta-ketoacyl synthase activity residues C181, H323, and H362. Residues 635–668 (GVNPSFILGHSLGEISASYCSGMIDLDTFCYTVY) are acyl/malonyl transferase. Catalysis depends on S645, which acts as the For acyl/malonyl transferase activity. Residues 925–1047 (IDHLGLSNSY…SNFQLLDHGN (123 aa)) are N-terminal hotdog fold. In terms of domain architecture, PKS/mFAS DH spans 925-1210 (IDHLGLSNSY…CKSLIPIKDS (286 aa)). H959 (proton acceptor; for dehydratase activity) is an active-site residue. The tract at residues 1064-1210 (NLSKLTKNEL…CKSLIPIKDS (147 aa)) is C-terminal hotdog fold. The Proton donor; for dehydratase activity role is filled by D1122. One can recognise a Carrier domain in the interval 2431-2508 (TGNKNIDELF…ISIKMILNSL (78 aa)). S2468 is subject to O-(pantetheine 4'-phosphoryl)serine. The chain crosses the membrane as a helical span at residues 2551-2571 (KIILLTGTTGFLGGFLLFNML).

Pantetheine 4'-phosphate serves as cofactor.

The protein resides in the membrane. Its function is as follows. Probable polyketide synthase. The protein is Probable polyketide synthase 6 (pks6) of Dictyostelium discoideum (Social amoeba).